The chain runs to 360 residues: Dynein intermediate light chain dil1 (360 aa).

It belongs to the dynein light intermediate chain DYN3 family. In terms of assembly, the dynein complex consists of at least two heavy chains and a number of intermediate and light chains. Interacts with rga3, sec10, sec16, syp1, rvb2, spbc19c7.04c, spbc2f12.05 and spac3a11.10c. The N-terminal part is acetylated.

The protein resides in the cytoplasm. It is found in the cytoskeleton. Functionally, component of the cytoplasmic dynein which acts as a motor for the intracellular retrograde motility of vesicles and organelles along microtubules. Promotes oscillatory nuclear movement and efficient pairing of homologous centromeres during meiotic prophase. This is Dynein intermediate light chain dil1 (dil1) from Schizosaccharomyces pombe (strain 972 / ATCC 24843) (Fission yeast).